The following is a 149-amino-acid chain: 3-dehydroquinate dehydratase (149 aa).

Catalysis depends on tyrosine 24, which acts as the Proton acceptor. Asparagine 75, histidine 81, and aspartate 88 together coordinate substrate. Histidine 101 functions as the Proton donor in the catalytic mechanism. Residues 102 to 103 (LS) and arginine 112 contribute to the substrate site.

It belongs to the type-II 3-dehydroquinase family. As to quaternary structure, homododecamer.

It catalyses the reaction 3-dehydroquinate = 3-dehydroshikimate + H2O. It participates in metabolic intermediate biosynthesis; chorismate biosynthesis; chorismate from D-erythrose 4-phosphate and phosphoenolpyruvate: step 3/7. Functionally, catalyzes a trans-dehydration via an enolate intermediate. The sequence is that of 3-dehydroquinate dehydratase from Bartonella tribocorum (strain CIP 105476 / IBS 506).